Reading from the N-terminus, the 1234-residue chain is Transcription-repair-coupling factor (1234 aa).

The Helicase ATP-binding domain maps to 663–824; that stretch reads DMEKPIPMDR…LAGIREMSTI (162 aa). Residue 676–683 participates in ATP binding; that stretch reads GDVGYGKT. A DEEQ box motif is present at residues 777-780; that stretch reads DEEQ. One can recognise a Helicase C-terminal domain in the interval 842–999; it reads DDKQIAAALR…GMAVALKDLE (158 aa). Positions 1207-1234 are disordered; it reads RQHIGITNPSPPGEDGRGRNTTIKERQP. The segment covering 1220–1234 has biased composition (basic and acidic residues); that stretch reads EDGRGRNTTIKERQP.

In the N-terminal section; belongs to the UvrB family. The protein in the C-terminal section; belongs to the helicase family. RecG subfamily.

The protein localises to the cytoplasm. Couples transcription and DNA repair by recognizing RNA polymerase (RNAP) stalled at DNA lesions. Mediates ATP-dependent release of RNAP and its truncated transcript from the DNA, and recruitment of nucleotide excision repair machinery to the damaged site. The polypeptide is Transcription-repair-coupling factor (Mycobacterium bovis (strain ATCC BAA-935 / AF2122/97)).